The chain runs to 147 residues: Ubiquitin-conjugating enzyme E2-16 kDa (147 aa).

Positions 1–147 constitute a UBC core domain; that stretch reads MAFKRINKEL…AREWTRKYAI (147 aa). The active-site Glycyl thioester intermediate is C107.

The protein belongs to the ubiquitin-conjugating enzyme family.

The enzyme catalyses S-ubiquitinyl-[E1 ubiquitin-activating enzyme]-L-cysteine + [E2 ubiquitin-conjugating enzyme]-L-cysteine = [E1 ubiquitin-activating enzyme]-L-cysteine + S-ubiquitinyl-[E2 ubiquitin-conjugating enzyme]-L-cysteine.. It participates in protein modification; protein ubiquitination. In terms of biological role, catalyzes the covalent attachment of ubiquitin to other proteins. May also mediate selective proteolysis pathways. The sequence is that of Ubiquitin-conjugating enzyme E2-16 kDa (UBC1) from Colletotrichum gloeosporioides (Anthracnose fungus).